The primary structure comprises 292 residues: Protease HtpX (292 aa).

A run of 2 helical transmembrane segments spans residues 5–25 and 34–54; these read IFLF…VMSL and SGLL…SLLL. H140 contacts Zn(2+). E141 is an active-site residue. Residue H144 participates in Zn(2+) binding. 2 helical membrane passes run 155 to 175 and 193 to 213; these read LLQG…GGII and IIVF…AMWF. A Zn(2+)-binding site is contributed by E218.

Belongs to the peptidase M48B family. The cofactor is Zn(2+).

It localises to the cell inner membrane. The chain is Protease HtpX from Xanthomonas euvesicatoria pv. vesicatoria (strain 85-10) (Xanthomonas campestris pv. vesicatoria).